The sequence spans 91 residues: MSRSLKKGPFIADHLLKKIEALNAKNEKQVIKTWSRSSTIIPDMVGHTIAVHNGRQHVPVFISDQMVGHKLGEFAPTRTYRGHGSDKKSKR.

It belongs to the universal ribosomal protein uS19 family.

Functionally, protein S19 forms a complex with S13 that binds strongly to the 16S ribosomal RNA. The chain is Small ribosomal subunit protein uS19 from Trichodesmium erythraeum (strain IMS101).